The primary structure comprises 130 residues: Osteocrin (130 aa).

An N-terminal signal peptide occupies residues 1–25; the sequence is MLDWRLASTHFILAMIVMLWGSGKA. Arg129 is modified (arginine amide).

This sequence belongs to the Osteocrin family. In terms of assembly, interacts with NPR3. Expressed in skeletal muscle and to a much lesser extent in bone, brown adipose tissue, spleen and testis. Not expressed in neurons.

The protein resides in the secreted. In terms of biological role, hormone that acts as a ligand for natriuretic peptide receptor NPR3/NPR-C and promotes bone growth and physical endurance in muscle. Acts as a regulator of osteoblast differentiation and bone growth by binding to natriuretic peptide receptor NPR3/NPR-C, thereby preventing binding between NPR3/NPR-C and natriuretic peptides, leading to increase cGMP production. Required to enhance physical endurance: induced following physical exercise in muscle and promotes cGMP production, probably by interacting with NPR3/NPR-C. May act as an autocrine and paracrine factor linked to glucose metabolism in skeletal muscle. The protein is Osteocrin of Mus musculus (Mouse).